Reading from the N-terminus, the 595-residue chain is Aspartate--tRNA(Asp/Asn) ligase (595 aa).

Position 174 (Glu-174) interacts with L-aspartate. Positions 198-201 (QLFK) are aspartate. An L-aspartate-binding site is contributed by Arg-220. ATP-binding positions include 220–222 (RDE) and Gln-229. An L-aspartate-binding site is contributed by His-456. Residue Glu-486 coordinates ATP. Residue Arg-493 coordinates L-aspartate. 538–541 (GFDR) is a binding site for ATP.

The protein belongs to the class-II aminoacyl-tRNA synthetase family. Type 1 subfamily. In terms of assembly, homodimer.

Its subcellular location is the cytoplasm. It catalyses the reaction tRNA(Asx) + L-aspartate + ATP = L-aspartyl-tRNA(Asx) + AMP + diphosphate. Its function is as follows. Aspartyl-tRNA synthetase with relaxed tRNA specificity since it is able to aspartylate not only its cognate tRNA(Asp) but also tRNA(Asn). Reaction proceeds in two steps: L-aspartate is first activated by ATP to form Asp-AMP and then transferred to the acceptor end of tRNA(Asp/Asn). This chain is Aspartate--tRNA(Asp/Asn) ligase, found in Gloeobacter violaceus (strain ATCC 29082 / PCC 7421).